Reading from the N-terminus, the 617-residue chain is DNA mismatch repair protein MutL (617 aa).

This sequence belongs to the DNA mismatch repair MutL/HexB family.

In terms of biological role, this protein is involved in the repair of mismatches in DNA. It is required for dam-dependent methyl-directed DNA mismatch repair. May act as a 'molecular matchmaker', a protein that promotes the formation of a stable complex between two or more DNA-binding proteins in an ATP-dependent manner without itself being part of a final effector complex. This chain is DNA mismatch repair protein MutL, found in Christiangramia forsetii (strain DSM 17595 / CGMCC 1.15422 / KT0803) (Gramella forsetii).